A 510-amino-acid polypeptide reads, in one-letter code: Secreted RxLR effector protein 108 (510 aa).

The N-terminal stretch at 1-20 is a signal peptide; it reads MRGAYYVLTALFVVTSSDIA. N-linked (GlcNAc...) asparagine glycosylation occurs at N47. A RxLR-dEER motif is present at residues 48 to 65; that stretch reads RSLRGSRDGRNDLANEER. 2 disordered regions span residues 111-139 and 386-442; these read RAAKAVEEKSRPAKAAKKTPRAAKAAKKT and KRSR…DDPK. Residues 122-137 are compositionally biased toward basic residues; it reads PAKAAKKTPRAAKAAK. A compositionally biased stretch (polar residues) spans 393–405; the sequence is DGNTDTASLPSKQ. The segment covering 429-442 has biased composition (basic and acidic residues); it reads VPTKEIKSSFDDPK.

It belongs to the RxLR effector family.

It localises to the secreted. The protein resides in the host nucleus. Functionally, secreted effector that completely suppresses the host cell death induced by cell death-inducing proteins. This chain is Secreted RxLR effector protein 108, found in Plasmopara viticola (Downy mildew of grapevine).